We begin with the raw amino-acid sequence, 449 residues long: Tubulin beta chain (449 aa).

Positions 11, 69, 138, 142, 143, 144, 204, and 226 each coordinate GTP. Glu-69 is a binding site for Mg(2+).

Belongs to the tubulin family. As to quaternary structure, dimer of alpha and beta chains. A typical microtubule is a hollow water-filled tube with an outer diameter of 25 nm and an inner diameter of 15 nM. Alpha-beta heterodimers associate head-to-tail to form protofilaments running lengthwise along the microtubule wall with the beta-tubulin subunit facing the microtubule plus end conferring a structural polarity. Microtubules usually have 13 protofilaments but different protofilament numbers can be found in some organisms and specialized cells. The cofactor is Mg(2+).

The protein resides in the cytoplasm. Its subcellular location is the cytoskeleton. Functionally, tubulin is the major constituent of microtubules, a cylinder consisting of laterally associated linear protofilaments composed of alpha- and beta-tubulin heterodimers. Microtubules grow by the addition of GTP-tubulin dimers to the microtubule end, where a stabilizing cap forms. Below the cap, tubulin dimers are in GDP-bound state, owing to GTPase activity of alpha-tubulin. The polypeptide is Tubulin beta chain (TUB2) (Candida albicans (Yeast)).